Here is a 344-residue protein sequence, read N- to C-terminus: RNA 3'-terminal phosphate cyclase (344 aa).

ATP contacts are provided by residues Q103 and 283–287 (HLADQ). Residue H308 is the Tele-AMP-histidine intermediate of the active site.

This sequence belongs to the RNA 3'-terminal cyclase family. Type 1 subfamily.

It localises to the cytoplasm. The catalysed reaction is a 3'-end 3'-phospho-ribonucleotide-RNA + ATP = a 3'-end 2',3'-cyclophospho-ribonucleotide-RNA + AMP + diphosphate. Functionally, catalyzes the conversion of 3'-phosphate to a 2',3'-cyclic phosphodiester at the end of RNA. The mechanism of action of the enzyme occurs in 3 steps: (A) adenylation of the enzyme by ATP; (B) transfer of adenylate to an RNA-N3'P to produce RNA-N3'PP5'A; (C) and attack of the adjacent 2'-hydroxyl on the 3'-phosphorus in the diester linkage to produce the cyclic end product. The biological role of this enzyme is unknown but it is likely to function in some aspects of cellular RNA processing. The chain is RNA 3'-terminal phosphate cyclase from Salmonella agona (strain SL483).